We begin with the raw amino-acid sequence, 438 residues long: Glutamyl-tRNA(Gln) amidotransferase subunit D (438 aa).

The region spanning 92–422 (PDVTIIGTGG…EEVRRMMLTN (331 aa)) is the Asparaginase/glutaminase domain. Active-site residues include Thr102, Thr178, Asp179, and Lys256.

The protein belongs to the asparaginase 1 family. GatD subfamily. As to quaternary structure, heterodimer of GatD and GatE.

It carries out the reaction L-glutamyl-tRNA(Gln) + L-glutamine + ATP + H2O = L-glutaminyl-tRNA(Gln) + L-glutamate + ADP + phosphate + H(+). Its function is as follows. Allows the formation of correctly charged Gln-tRNA(Gln) through the transamidation of misacylated Glu-tRNA(Gln) in organisms which lack glutaminyl-tRNA synthetase. The reaction takes place in the presence of glutamine and ATP through an activated gamma-phospho-Glu-tRNA(Gln). The GatDE system is specific for glutamate and does not act on aspartate. This Pyrococcus horikoshii (strain ATCC 700860 / DSM 12428 / JCM 9974 / NBRC 100139 / OT-3) protein is Glutamyl-tRNA(Gln) amidotransferase subunit D.